Here is a 159-residue protein sequence, read N- to C-terminus: Phosphopantetheine adenylyltransferase (159 aa).

Ser9 is a binding site for substrate. ATP contacts are provided by residues 9–10 and His17; that span reads SF. Residues Lys41, Leu74, and Lys88 each contribute to the substrate site. Residues 89–91, Glu99, and 123–129 contribute to the ATP site; these read GLR and YLHLSST.

This sequence belongs to the bacterial CoaD family. Homohexamer. It depends on Mg(2+) as a cofactor.

Its subcellular location is the cytoplasm. The catalysed reaction is (R)-4'-phosphopantetheine + ATP + H(+) = 3'-dephospho-CoA + diphosphate. The protein operates within cofactor biosynthesis; coenzyme A biosynthesis; CoA from (R)-pantothenate: step 4/5. In terms of biological role, reversibly transfers an adenylyl group from ATP to 4'-phosphopantetheine, yielding dephospho-CoA (dPCoA) and pyrophosphate. The polypeptide is Phosphopantetheine adenylyltransferase (Arthrobacter sp. (strain FB24)).